Consider the following 196-residue polypeptide: Acyl-homoserine-lactone synthase (196 aa).

This sequence belongs to the autoinducer synthase family.

It carries out the reaction a fatty acyl-[ACP] + S-adenosyl-L-methionine = an N-acyl-L-homoserine lactone + S-methyl-5'-thioadenosine + holo-[ACP] + H(+). In terms of biological role, required for the synthesis of a yet unknown N-aceyl-homoserine lactone (N-aceyl-HSL), an autoinducer molecule which binds to PhzR and thus regulates phenazine production. The protein is Acyl-homoserine-lactone synthase (phzI) of Pseudomonas chlororaphis (Pseudomonas aureofaciens).